A 145-amino-acid chain; its full sequence is UPF0201 protein LS215_1276 (145 aa).

It belongs to the UPF0201 family.

This chain is UPF0201 protein LS215_1276, found in Saccharolobus islandicus (strain L.S.2.15 / Lassen #1) (Sulfolobus islandicus).